Here is a 311-residue protein sequence, read N- to C-terminus: Aspartate carbamoyltransferase catalytic subunit (311 aa).

Carbamoyl phosphate-binding residues include R55 and T56. K85 serves as a coordination point for L-aspartate. Residues R106, H135, and Q138 each coordinate carbamoyl phosphate. L-aspartate-binding residues include R168 and R230. Residues L268 and P269 each coordinate carbamoyl phosphate.

The protein belongs to the aspartate/ornithine carbamoyltransferase superfamily. ATCase family. As to quaternary structure, heterododecamer (2C3:3R2) of six catalytic PyrB chains organized as two trimers (C3), and six regulatory PyrI chains organized as three dimers (R2).

The enzyme catalyses carbamoyl phosphate + L-aspartate = N-carbamoyl-L-aspartate + phosphate + H(+). It participates in pyrimidine metabolism; UMP biosynthesis via de novo pathway; (S)-dihydroorotate from bicarbonate: step 2/3. Its function is as follows. Catalyzes the condensation of carbamoyl phosphate and aspartate to form carbamoyl aspartate and inorganic phosphate, the committed step in the de novo pyrimidine nucleotide biosynthesis pathway. In Serratia proteamaculans (strain 568), this protein is Aspartate carbamoyltransferase catalytic subunit.